The following is a 330-amino-acid chain: AH receptor-interacting protein (330 aa).

Positions 31 to 121 constitute a PPIase FKBP-type domain; it reads GTKATFHFRT…KDPLEGQRHC (91 aa). Ser-43 bears the Phosphoserine mark. TPR repeat units lie at residues 179-212, 231-264, and 265-298; these read VPVIHQEGNRLYREGQVKEAAAKYYDAIACLKNL, TPLLLNYCQCKLVAQEYYEVLDHCSSILNKYDDN, and VKAYFKRGKAHAAVWNAQEAQADFAKVLELDPAL.

As to quaternary structure, interacts with RET in the pituitary gland; this interaction prevents the formation of the AIP-survivin complex.

It localises to the cytoplasm. May play a positive role in AHR-mediated (aromatic hydrocarbon receptor) signaling, possibly by influencing its receptivity for ligand and/or its nuclear targeting. This chain is AH receptor-interacting protein (Aip), found in Mus musculus (Mouse).